A 360-amino-acid polypeptide reads, in one-letter code: Nucleoporin SEH1 (360 aa).

6 WD repeats span residues 10 to 49, 55 to 96, 111 to 152, 160 to 210, 217 to 258, and 276 to 315; these read DHKD…DWHC, THSG…SNDK, DSRT…NLSQ, SCKL…RKYA, TVTD…KELT, and NHNS…NWKC. Residue K12 forms a Glycyl lysine isopeptide (Lys-Gly) (interchain with G-Cter in SUMO2) linkage. S179 and S190 each carry phosphoserine. Positions 324–354 are enriched in polar residues; the sequence is SPVNGSSQQGTSNPSLGSNIPSLQNSLNGSS. Residues 324 to 360 form a disordered region; the sequence is SPVNGSSQQGTSNPSLGSNIPSLQNSLNGSSAGRKHS.

Belongs to the WD repeat SEC13 family. In terms of assembly, component of the Nup107-160 subcomplex of the nuclear pore complex (NPC). The Nup107-160 subcomplex includes NUP160, NUP133, NUP107, NUP98, NUP85, NUP43, NUP37, SEH1 and SEC13. The SEH1 subunit appears to be only weakly associated with the Nup107-160 subcomplex. Component of the GATOR2 subcomplex, composed of MIOS, SEC13, SEH1L, WDR24 and WDR59. The GATOR2 complex interacts with CASTOR1 and CASTOR2; the interaction is negatively regulated by arginine. The GATOR2 complex interacts with SESN1, SESN2 and SESN3; the interaction is negatively regulated by amino acids. SESN1, SESN2 and SESN3 convey leucine availability via direct interaction with SEH1L and WDR24.

The protein localises to the chromosome. The protein resides in the centromere. It is found in the kinetochore. It localises to the nucleus. Its subcellular location is the nuclear pore complex. The protein localises to the lysosome membrane. The GATOR2 complex is negatively regulated by the upstream amino acid sensors CASTOR1 and SESN2, which sequester the GATOR2 complex in absence of amino acids. In the presence of abundant amino acids, GATOR2 is released from CASTOR1 and SESN2 and activated. Its function is as follows. Component of the Nup107-160 subcomplex of the nuclear pore complex (NPC). The Nup107-160 subcomplex is required for the assembly of a functional NPC. The Nup107-160 subcomplex is also required for normal kinetochore microtubule attachment, mitotic progression and chromosome segregation. This subunit plays a role in recruitment of the Nup107-160 subcomplex to the kinetochore. In terms of biological role, as a component of the GATOR2 complex, functions as an activator of the amino acid-sensing branch of the mTORC1 signaling pathway. The GATOR2 complex indirectly activates mTORC1 through the inhibition of the GATOR1 subcomplex. GATOR2 probably acts as an E3 ubiquitin-protein ligase toward GATOR1. In the presence of abundant amino acids, the GATOR2 complex mediates ubiquitination of the NPRL2 core component of the GATOR1 complex, leading to GATOR1 inactivation. In the absence of amino acids, GATOR2 is inhibited, activating the GATOR1 complex. Within the GATOR2 complex, SEC13 and SEH1L are required to stabilize the complex. This chain is Nucleoporin SEH1 (SEH1L), found in Pongo abelii (Sumatran orangutan).